Consider the following 200-residue polypeptide: GTP cyclohydrolase 1 (200 aa).

Zn(2+)-binding residues include Cys-87, His-90, and Cys-158.

The protein belongs to the GTP cyclohydrolase I family. In terms of assembly, toroid-shaped homodecamer, composed of two pentamers of five dimers.

It carries out the reaction GTP + H2O = 7,8-dihydroneopterin 3'-triphosphate + formate + H(+). It participates in cofactor biosynthesis; 7,8-dihydroneopterin triphosphate biosynthesis; 7,8-dihydroneopterin triphosphate from GTP: step 1/1. This chain is GTP cyclohydrolase 1, found in Xanthomonas euvesicatoria pv. vesicatoria (strain 85-10) (Xanthomonas campestris pv. vesicatoria).